The primary structure comprises 104 residues: Cytochrome c-551 (104 aa).

The first 22 residues, 1-22 (MKKILIPMLALGGALAMQPALA), serve as a signal peptide directing secretion. Heme c is bound by residues C34, C37, H38, and M83.

Binds 1 heme c group covalently per subunit.

The protein localises to the periplasm. In terms of biological role, electron donor for cytochrome cd1 in nitrite and nitrate respiration. This Stutzerimonas stutzeri (Pseudomonas stutzeri) protein is Cytochrome c-551 (nirM).